The sequence spans 262 residues: Phosphatidylglycerol--prolipoprotein diacylglyceryl transferase (262 aa).

Transmembrane regions (helical) follow at residues 17 to 37 (LAIHWYGLMYLIGFALVYALG), 57 to 77 (LIFYSVLGVVLGGRLGYVLFY), 95 to 115 (GGMSFHGGLIGVIVVMLLFAH), and 119 to 139 (LGFFTVSDFIAPLIPLGLAAG). An a 1,2-diacyl-sn-glycero-3-phospho-(1'-sn-glycerol)-binding site is contributed by R140. Helical transmembrane passes span 173–193 (PSQLYELGLEGIVLFALLWWY), 200–220 (AGQVSAMFLMGYGAFRFLVEF), and 227–247 (FLGLLAAGLSMGQWLSIPMVL).

The protein belongs to the Lgt family.

The protein resides in the cell inner membrane. It catalyses the reaction L-cysteinyl-[prolipoprotein] + a 1,2-diacyl-sn-glycero-3-phospho-(1'-sn-glycerol) = an S-1,2-diacyl-sn-glyceryl-L-cysteinyl-[prolipoprotein] + sn-glycerol 1-phosphate + H(+). It participates in protein modification; lipoprotein biosynthesis (diacylglyceryl transfer). In terms of biological role, catalyzes the transfer of the diacylglyceryl group from phosphatidylglycerol to the sulfhydryl group of the N-terminal cysteine of a prolipoprotein, the first step in the formation of mature lipoproteins. The chain is Phosphatidylglycerol--prolipoprotein diacylglyceryl transferase from Bordetella parapertussis (strain 12822 / ATCC BAA-587 / NCTC 13253).